The following is a 57-amino-acid chain: Small ribosomal subunit protein eS27 (57 aa).

Zn(2+) contacts are provided by Cys-10, Cys-13, Cys-29, and Cys-32. The C4-type zinc-finger motif lies at 10–32 (CPDCENEQSLFEKAASEVSCAVC).

Belongs to the eukaryotic ribosomal protein eS27 family. As to quaternary structure, part of the 30S ribosomal subunit. Zn(2+) is required as a cofactor.

In Haloarcula marismortui (strain ATCC 43049 / DSM 3752 / JCM 8966 / VKM B-1809) (Halobacterium marismortui), this protein is Small ribosomal subunit protein eS27.